We begin with the raw amino-acid sequence, 294 residues long: Phosphate import ATP-binding protein PstB (294 aa).

Over residues 1–18 (MSETMTNQNVVNEEQPFN) the composition is skewed to polar residues. Positions 1-24 (MSETMTNQNVVNEEQPFNESKHRS) are disordered. The ABC transporter domain occupies 48–289 (LEVNKLKLFY…PSCKQTEDYI (242 aa)). 80–87 (GPSGCGKS) is an ATP binding site.

Belongs to the ABC transporter superfamily. Phosphate importer (TC 3.A.1.7) family. The complex is composed of two ATP-binding proteins (PstB), two transmembrane proteins (PstC and PstA) and a solute-binding protein (PstS).

It is found in the cell inner membrane. It catalyses the reaction phosphate(out) + ATP + H2O = ADP + 2 phosphate(in) + H(+). Part of the ABC transporter complex PstSACB involved in phosphate import. Responsible for energy coupling to the transport system. The polypeptide is Phosphate import ATP-binding protein PstB (Hahella chejuensis (strain KCTC 2396)).